We begin with the raw amino-acid sequence, 901 residues long: Probable inorganic carbon transporter subunit DabA (901 aa).

4 residues coordinate Zn(2+): Cys-424, Asp-426, His-606, and Cys-621.

It belongs to the inorganic carbon transporter (TC 9.A.2) DabA family. As to quaternary structure, forms a complex with DabB. Zn(2+) serves as cofactor.

The protein resides in the cell membrane. Part of an energy-coupled inorganic carbon pump. In Staphylococcus aureus (strain bovine RF122 / ET3-1), this protein is Probable inorganic carbon transporter subunit DabA.